Reading from the N-terminus, the 133-residue chain is MGNDAIDDVTTAPRNASSRGAETVRVSSTDITISIGRVLVEEGFSGNPREHRQGTNRFPVSTSKYQGRTRKARITTRRRVSKPGLRIYPGYKDIPEVSGGIGTATPPTPGGTTTDREARQKRIGGEAPRHVWR.

2 disordered regions span residues 1 to 23 (MGND…GAET) and 44 to 133 (FSGN…HVWR). Polar residues-rich tracts occupy residues 12–23 (APRNASSRGAET) and 55–66 (TNRFPVSTSKYQ). Basic residues predominate over residues 67 to 81 (GRTRKARITTRRRVS). Residues 114 to 133 (TDREARQKRIGGEAPRHVWR) show a composition bias toward basic and acidic residues.

This sequence belongs to the universal ribosomal protein uS8 family. In terms of assembly, part of the 30S ribosomal subunit.

The protein resides in the plastid. The protein localises to the chloroplast. Its function is as follows. One of the primary rRNA binding proteins, it binds directly to 16S rRNA central domain where it helps coordinate assembly of the platform of the 30S subunit. The polypeptide is Small ribosomal subunit protein uS8c (rps8) (Selaginella uncinata (Blue spike-moss)).